A 1007-amino-acid chain; its full sequence is Glutamate receptor ionotropic, delta-2 (1007 aa).

The signal sequence occupies residues 1–23; it reads MEVFPFLLVLSVWWSRTWDSANA. The interaction with CBLN1 homotrimer stretch occupies residues 24–345; it reads DSIIHIGAIF…NAFHKKLEDR (322 aa). The Extracellular segment spans residues 24–566; that stretch reads DSIIHIGAIF…DMFACLAPFD (543 aa). 3 cysteine pairs are disulfide-bonded: cysteine 83-cysteine 355, cysteine 99-cysteine 131, and cysteine 298-cysteine 310. A glycan (N-linked (GlcNAc...) asparagine) is linked at asparagine 293. Residue asparagine 426 is glycosylated (N-linked (GlcNAc...) asparagine). The Ca(2+) site is built by glutamate 531, valine 534, and aspartate 535. Residues 567-587 form a helical membrane-spanning segment; it reads LSLWACIAGTVLLVGLLVYLL. Residues 588 to 635 lie on the Cytoplasmic side of the membrane; that stretch reads NWLNPPRLQMGSMTSTTLYNSMWFVYGSFVQQGGEVPYTTLATRMMMG. Residues 636–656 traverse the membrane as a helical segment; that stretch reads AWWLFALIVISSYTANLAAFL. The Extracellular portion of the chain corresponds to 657–830; it reads TITRIESSIQ…QKGGALDIKS (174 aa). N-linked (GlcNAc...) asparagine glycans are attached at residues asparagine 713 and asparagine 716. Aspartate 753, aspartate 755, and serine 757 together coordinate Ca(2+). A helical transmembrane segment spans residues 831 to 851; the sequence is FAGVFCILAAGIVLSCFIAML. Residues 852–1007 lie on the Cytoplasmic side of the membrane; that stretch reads ETWWNKRKGS…GNDPDRGTSI (156 aa). The residue at position 883 (serine 883) is a Phosphoserine. Threonine 886 is subject to Phosphothreonine. Serine 890 bears the Phosphoserine mark. The interval 921 to 991 is interaction with AP4M1; it reads DFRNTHITTT…MSSIPYQPTP (71 aa). The PDZ-binding motif lies at 1005–1007; the sequence is TSI. The residue at position 1006 (serine 1006) is a Phosphoserine.

Belongs to the glutamate-gated ion channel (TC 1.A.10.1) family. GRID2 subfamily. As to quaternary structure, tetramer; dimer of dimers. Interacts with EML2, MAGI2 (via PDZ domains) and AP4M1. Interacts with BECN1, GOPC, GRID2IP, SHANK1 and SHANK2. Interacts with CBLN2, but not with CBLN4. Interacts with CBLN1 (via C1q domain); the interaction is CBLN1-NRX1 complex formation-dependent; CBLN1-binding is calcium-independent; CBLN1 hexamers anchor GRID2 N-terminal domain dimers to monomeric NRXN1 isoform beta; promotes synaptogenesis and mediates the D-Serine-dependent long term depression signals and AMPA receptor endocytosis.

The protein localises to the postsynaptic cell membrane. It catalyses the reaction Ca(2+)(in) = Ca(2+)(out). The enzyme catalyses Na(+)(in) = Na(+)(out). Its function is as follows. Member of the ionotropic glutamate receptor family, which plays a crucial role in synaptic organization and signal transduction in the central nervous system. Although it shares structural features with ionotropic glutamate receptors, does not bind glutamate as a primary ligand. Promotes synaptogenesis and mediates the D-Serine-dependent long term depression signals and AMPA receptor endocytosis of cerebellar parallel fiber-Purkinje cell (PF-PC) synapses through the NRX1B-CBLN1-GRID2 triad complex. In the presence of neurexins and cerebellins, forms cation-selective channels that are proposed to be gated by glycine and D-serine. However, recent research disputes this ligand-gated cation channel activity. Cation-selective ion channel activity can be triggered by GRM1 in Purkinje cells. The chain is Glutamate receptor ionotropic, delta-2 (GRID2) from Homo sapiens (Human).